We begin with the raw amino-acid sequence, 310 residues long: Ribosomal RNA small subunit methyltransferase H (310 aa).

Residues 33 to 35, Asp53, Phe79, Asp100, and Gln107 contribute to the S-adenosyl-L-methionine site; that span reads AGH.

This sequence belongs to the methyltransferase superfamily. RsmH family.

It localises to the cytoplasm. It catalyses the reaction cytidine(1402) in 16S rRNA + S-adenosyl-L-methionine = N(4)-methylcytidine(1402) in 16S rRNA + S-adenosyl-L-homocysteine + H(+). Specifically methylates the N4 position of cytidine in position 1402 (C1402) of 16S rRNA. The sequence is that of Ribosomal RNA small subunit methyltransferase H from Clostridium botulinum (strain Eklund 17B / Type B).